The chain runs to 228 residues: Small ribosomal subunit protein uS3 (228 aa).

In terms of domain architecture, KH type-2 spans 39–107; it reads TREYLQDKLK…PVHINIEEIR (69 aa).

It belongs to the universal ribosomal protein uS3 family. As to quaternary structure, part of the 30S ribosomal subunit. Forms a tight complex with proteins S10 and S14.

Functionally, binds the lower part of the 30S subunit head. Binds mRNA in the 70S ribosome, positioning it for translation. The sequence is that of Small ribosomal subunit protein uS3 from Pseudomonas putida (strain ATCC 700007 / DSM 6899 / JCM 31910 / BCRC 17059 / LMG 24140 / F1).